Here is a 352-residue protein sequence, read N- to C-terminus: tRNA pseudouridine synthase D (352 aa).

Catalysis depends on D81, which acts as the Nucleophile. The region spanning 157 to 303 is the TRUD domain; the sequence is GVPNYFGTQR…MDHERRILRL (147 aa).

This sequence belongs to the pseudouridine synthase TruD family.

It catalyses the reaction uridine(13) in tRNA = pseudouridine(13) in tRNA. Functionally, responsible for synthesis of pseudouridine from uracil-13 in transfer RNAs. This is tRNA pseudouridine synthase D from Pseudomonas putida (strain ATCC 47054 / DSM 6125 / CFBP 8728 / NCIMB 11950 / KT2440).